A 147-amino-acid chain; its full sequence is Hemoglobin subunit delta (147 aa).

One can recognise a Globin domain in the interval 3-147 (HLTPDEKNAV…VATALAHKYH (145 aa)). Serine 51 carries the phosphoserine modification. The heme b site is built by histidine 64 and histidine 93.

The protein belongs to the globin family. As to quaternary structure, heterotetramer of two delta chains and two alpha chains. In terms of tissue distribution, red blood cells.

This Otolemur crassicaudatus (Brown greater galago) protein is Hemoglobin subunit delta (HBD).